The following is a 104-amino-acid chain: Large ribosomal subunit protein bL21c (104 aa).

It belongs to the bacterial ribosomal protein bL21 family. Part of the 50S ribosomal subunit.

It is found in the plastid. The protein resides in the cyanelle. This protein binds to 23S rRNA. The protein is Large ribosomal subunit protein bL21c of Cyanophora paradoxa.